Consider the following 382-residue polypeptide: Succinate--CoA ligase [ADP-forming] subunit beta (382 aa).

One can recognise an ATP-grasp domain in the interval 9–240; the sequence is KELFSKYGVK…PRDVTEFEAY (232 aa). ATP-binding positions include Lys-45, 52-54, Val-94, and Glu-99; that span reads GRG. Residues Asn-193 and Asp-207 each coordinate Mg(2+). Residues Asn-260 and 317-319 contribute to the substrate site; that span reads GIT.

The protein belongs to the succinate/malate CoA ligase beta subunit family. As to quaternary structure, heterotetramer of two alpha and two beta subunits. Mg(2+) serves as cofactor.

The catalysed reaction is succinate + ATP + CoA = succinyl-CoA + ADP + phosphate. It catalyses the reaction GTP + succinate + CoA = succinyl-CoA + GDP + phosphate. The protein operates within carbohydrate metabolism; tricarboxylic acid cycle; succinate from succinyl-CoA (ligase route): step 1/1. Its function is as follows. Succinyl-CoA synthetase functions in the citric acid cycle (TCA), coupling the hydrolysis of succinyl-CoA to the synthesis of either ATP or GTP and thus represents the only step of substrate-level phosphorylation in the TCA. The beta subunit provides nucleotide specificity of the enzyme and binds the substrate succinate, while the binding sites for coenzyme A and phosphate are found in the alpha subunit. This Pyrobaculum aerophilum (strain ATCC 51768 / DSM 7523 / JCM 9630 / CIP 104966 / NBRC 100827 / IM2) protein is Succinate--CoA ligase [ADP-forming] subunit beta.